We begin with the raw amino-acid sequence, 201 residues long: Ras-related protein Rab-9B (201 aa).

GTP-binding residues include Val18, Gly19, Lys20, Ser21, Ser22, Asp33, Ser34, Ala36, His38, and Thr39. Ser21 is a binding site for Mg(2+). Residues 31 to 42 (KFDSQAFHTIGV) carry the Switch 1 motif. Ser34 is modified (phosphoserine). Mg(2+) contacts are provided by Thr39 and Asp62. Positions 64 to 78 (AGQERFKSLRTPFYR) match the Switch 2 motif. Residues Gly65, Asn124, Lys125, Ala155, and Lys156 each contribute to the GTP site. Residues Cys200 and Cys201 are each lipidated (S-geranylgeranyl cysteine).

Belongs to the small GTPase superfamily. Rab family. Interacts (GTP-bound form) with SGSM1; the GDP-bound form has much lower affinity for SGSM1. The GTP-bound form but not the GDP-bound form interacts with HPS4 and the BLOC-3 complex (heterodimer of HPS1 and HPS4) but does not interact with HPS1 alone. Interacts (GTP-bound form) with NDE1. Mg(2+) serves as cofactor.

It is found in the cell membrane. It localises to the cytoplasmic vesicle. The protein localises to the phagosome membrane. It catalyses the reaction GTP + H2O = GDP + phosphate + H(+). With respect to regulation, regulated by guanine nucleotide exchange factors (GEFs) which promote the exchange of bound GDP for free GTP. Regulated by GTPase activating proteins (GAPs) which increase the GTP hydrolysis activity. Inhibited by GDP dissociation inhibitors (GDIs). Its function is as follows. The small GTPases Rab are key regulators of intracellular membrane trafficking, from the formation of transport vesicles to their fusion with membranes. Rabs cycle between an inactive GDP-bound form and an active GTP-bound form that is able to recruit to membranes different sets of downstream effectors directly responsible for vesicle formation, movement, tethering and fusion. RAB9B is involved in the transport of proteins between the endosomes and the trans Golgi network. May use NDE1/NDEL1 as an effector to interact with the dynein motor complex in order to control retrograde trafficking of RAB9-associated late endosomes to the TGN. The chain is Ras-related protein Rab-9B from Mus musculus (Mouse).